An 845-amino-acid polypeptide reads, in one-letter code: Protein P (845 aa).

Positions 1–179 (MPLSYQHFRK…FCGSPYSWEQ (179 aa)) are terminal protein domain (TP). Residues 180 to 348 (ELHHGRSVTK…YCLSHLVNLL (169 aa)) form a spacer region. 3 disordered regions span residues 186-205 (SVTKTSQRHGDESFCSQPSG), 222-245 (QPRLGLQPHQGPLATSQSGRSGSI), and 288-318 (YSHLSTSKRQSSSGHAVEFHKVPPNSARSQS). A compositionally biased stretch (polar residues) spans 289-301 (SHLSTSKRQSSSG). The interval 349–692 (EDWGPCADHG…YMNLYPVARQ (344 aa)) is polymerase/reverse transcriptase domain (RT). The Reverse transcriptase domain occupies 359–602 (EHHIRIPRTP…YSLNFMGYII (244 aa)). Positions 431, 553, and 554 each coordinate Mg(2+).

The protein belongs to the hepadnaviridae P protein family.

It catalyses the reaction DNA(n) + a 2'-deoxyribonucleoside 5'-triphosphate = DNA(n+1) + diphosphate. It carries out the reaction Endonucleolytic cleavage to 5'-phosphomonoester.. With respect to regulation, activated by host HSP70 and HSP40 in vitro to be able to bind the epsilon loop of the pgRNA. Because deletion of the RNase H region renders the protein partly chaperone-independent, the chaperones may be needed indirectly to relieve occlusion of the RNA-binding site by this domain. Inhibited by several reverse-transcriptase inhibitors: Lamivudine, Adefovir and Entecavir. Functionally, multifunctional enzyme that converts the viral RNA genome into dsDNA in viral cytoplasmic capsids. This enzyme displays a DNA polymerase activity that can copy either DNA or RNA templates, and a ribonuclease H (RNase H) activity that cleaves the RNA strand of RNA-DNA heteroduplexes in a partially processive 3'- to 5'-endonucleasic mode. Neo-synthesized pregenomic RNA (pgRNA) are encapsidated together with the P protein, and reverse-transcribed inside the nucleocapsid. Initiation of reverse-transcription occurs first by binding the epsilon loop on the pgRNA genome, and is initiated by protein priming, thereby the 5'-end of (-)DNA is covalently linked to P protein. Partial (+)DNA is synthesized from the (-)DNA template and generates the relaxed circular DNA (RC-DNA) genome. After budding and infection, the RC-DNA migrates in the nucleus, and is converted into a plasmid-like covalently closed circular DNA (cccDNA). The activity of P protein does not seem to be necessary for cccDNA generation, and is presumably released from (+)DNA by host nuclear DNA repair machinery. This chain is Protein P, found in Hepatitis B virus genotype A3 (isolate Cameroon/CMR711/1994) (HBV-A).